A 729-amino-acid polypeptide reads, in one-letter code: Fatty acid oxidation complex subunit alpha (729 aa).

The segment at 1–189 is enoyl-CoA hydratase/isomerase; sequence MLYKGDTLYL…KIGLVDGVVK (189 aa). Asp-296 contacts substrate. Residues 311–729 form a 3-hydroxyacyl-CoA dehydrogenase region; that stretch reads ETPKQAAVLG…ARPVGSLKTA (419 aa). NAD(+)-binding positions include Met-324, Asp-343, 400–402, Lys-407, and Ser-429; that span reads VVE. His-450 serves as the catalytic For 3-hydroxyacyl-CoA dehydrogenase activity. Residue Asn-453 participates in NAD(+) binding. Positions 500 and 660 each coordinate substrate. Residues 708–729 are disordered; it reads RHNEPYYPPVEPARPVGSLKTA.

In the N-terminal section; belongs to the enoyl-CoA hydratase/isomerase family. The protein in the C-terminal section; belongs to the 3-hydroxyacyl-CoA dehydrogenase family. In terms of assembly, heterotetramer of two alpha chains (FadB) and two beta chains (FadA).

The catalysed reaction is a (3S)-3-hydroxyacyl-CoA + NAD(+) = a 3-oxoacyl-CoA + NADH + H(+). The enzyme catalyses a (3S)-3-hydroxyacyl-CoA = a (2E)-enoyl-CoA + H2O. It catalyses the reaction a 4-saturated-(3S)-3-hydroxyacyl-CoA = a (3E)-enoyl-CoA + H2O. It carries out the reaction (3S)-3-hydroxybutanoyl-CoA = (3R)-3-hydroxybutanoyl-CoA. The catalysed reaction is a (3Z)-enoyl-CoA = a 4-saturated (2E)-enoyl-CoA. The enzyme catalyses a (3E)-enoyl-CoA = a 4-saturated (2E)-enoyl-CoA. Its pathway is lipid metabolism; fatty acid beta-oxidation. Functionally, involved in the aerobic and anaerobic degradation of long-chain fatty acids via beta-oxidation cycle. Catalyzes the formation of 3-oxoacyl-CoA from enoyl-CoA via L-3-hydroxyacyl-CoA. It can also use D-3-hydroxyacyl-CoA and cis-3-enoyl-CoA as substrate. This chain is Fatty acid oxidation complex subunit alpha, found in Salmonella newport (strain SL254).